We begin with the raw amino-acid sequence, 149 residues long: Deoxyuridine 5'-triphosphate nucleotidohydrolase (149 aa).

Substrate is bound by residues 70 to 72, Asn-83, and 87 to 89; these read RSG and LID.

The protein belongs to the dUTPase family. It depends on Mg(2+) as a cofactor.

The catalysed reaction is dUTP + H2O = dUMP + diphosphate + H(+). It participates in pyrimidine metabolism; dUMP biosynthesis; dUMP from dCTP (dUTP route): step 2/2. This enzyme is involved in nucleotide metabolism: it produces dUMP, the immediate precursor of thymidine nucleotides and it decreases the intracellular concentration of dUTP so that uracil cannot be incorporated into DNA. The polypeptide is Deoxyuridine 5'-triphosphate nucleotidohydrolase (Blochmanniella pennsylvanica (strain BPEN)).